Consider the following 92-residue polypeptide: Progonadoliberin-1 (92 aa).

An N-terminal signal peptide occupies residues 1–23 (MEKSRKILVGVLLFTASVAICLA). Gln24 carries the pyrrolidone carboxylic acid modification. Glycine amide is present on Gly33.

Belongs to the GnRH family.

The protein resides in the secreted. In terms of biological role, stimulates the secretion of gonadotropins. In Gallus gallus (Chicken), this protein is Progonadoliberin-1 (GNRH1).